Here is a 295-residue protein sequence, read N- to C-terminus: Nucleotide-binding protein LSL_1171 (295 aa).

13–20 (GMSGAGKT) lines the ATP pocket. 63-66 (DLRS) contacts GTP.

It belongs to the RapZ-like family.

Functionally, displays ATPase and GTPase activities. In Ligilactobacillus salivarius (strain UCC118) (Lactobacillus salivarius), this protein is Nucleotide-binding protein LSL_1171.